A 512-amino-acid polypeptide reads, in one-letter code: Monocarboxylate transporter 14 (512 aa).

The Cytoplasmic segment spans residues 1-29 (MYTSHEDIGYDLEDDRKAKNKKTLKPHPD). A run of 12 helical transmembrane segments spans residues 30-50 (IDGG…ILIM), 76-96 (WVSS…GLFI), 105-125 (AIIG…AANV), 129-149 (FITF…PAVV), 161-181 (LAQG…TVLL), 193-211 (AMFI…GALM), 317-337 (MFVA…IPFI), 355-375 (FPLT…LGAV), 381-401 (ISVW…IFLL), 410-430 (LAVI…MPVV), 446-466 (IIIC…GWIF), and 476-496 (FYIC…QPCI). Topologically, residues 497–512 (QMIDQSRRKCIEGAHV) are cytoplasmic.

It belongs to the major facilitator superfamily. Monocarboxylate porter (TC 2.A.1.13) family.

Its subcellular location is the cell membrane. Functionally, proton-linked monocarboxylate transporter. May catalyze the transport of monocarboxylates across the plasma membrane. The sequence is that of Monocarboxylate transporter 14 (Slc16a14) from Mus musculus (Mouse).